A 993-amino-acid chain; its full sequence is MGMRPTARMPKLTRRSRILILIALGVIALLLAGPRLIDAYVDWLWFGELGYRSVFSTVLVTRFVVFLIAGLLVGGIVFAGLAVAYRTRPVFVPSNDNDPVARYRALVLSRLRLVSIGVPVAIGLLAGIIAQSYWVRIQLFLHGGDFGIKDPQFGKDLGFYAFELPFYRLLLSYLFVAVFLAFVANLLAHYIFGGIRLSGRTGALSRSARIQLVTLVGLLVLLKAVAYWLDRYELLSHTRGGKPFTGAGYTDINAVLPAKLILMAIALICAAAVFSAITMRDLRIPAIGLVLLLLSSLIVGAGWPLIVEQISVKPNAAQKESEYISRSITATRQAYGLTSDVVTYRNYTGDAQATAQQVADDRATTSNIRLLDPTIVSPAFTQFQQGKNFYYFPDQLSIDRYLDRNGALRDYVVAARELNPDRLIDNQRDWINRHTVYTHGNGFIASPANTVRGIANDPNQNGGYPEFLVNVVGANGNVVSDGPAPLDQPRVYFGPVISNTSADYAIVGRNGADREYDYETSTETKNYTYTGLGGVPIGDWLSRSVFAAKFAERNFLFSNVIGSNSKILFNRDPARRVEAVAPWLTTDSSVYPAIVNKRLVWIIDGYTTLDNYPYSELTSLESATADSNEVAFNKLAPDKRVSYIRNSVKATVDAYDGTVTLYQQDEQDPVLKAWMQVFPGTVKPKSDISPELAEHLRYPEDLFKVQRMLLAKYHVNDPVTFFSTSDFWDVPLDPNPTASSYQPPYYIVAKNIAKNDNSSSYQLTSAMNRFKRDYLAAYISASSDPATYGRITVLTIPGQVNGPKLANNAITTDPAVSQDLGVIGRDNQNRIRWGNLLTLPVGQGGLLYVEPVYASPGASDAASSYPRLIRVAMMYNDKIGYGPTVRDALTGLFGPGAGAAATNIQPTEGGAPAASPPANAPAPAVTPGSAPPVAAPPVPDGSVTLSPAKAAVLQEIQAAIGAAKDAQKKGDFAGYGAALQRLDDAITKYNNTK.

The next 7 helical transmembrane spans lie at 18–38, 63–83, 113–133, 175–195, 210–230, 254–274, and 287–307; these read ILIL…RLID, FVVF…GLAV, LVSI…AQSY, FVAV…FGGI, IQLV…YWLD, AVLP…AAVF, and IGLV…PLIV. Residues 903 to 941 form a disordered region; that stretch reads NIQPTEGGAPAASPPANAPAPAVTPGSAPPVAAPPVPDG. Over residues 929-939 the composition is skewed to pro residues; the sequence is SAPPVAAPPVP.

This sequence belongs to the UPF0182 family.

The protein resides in the cell membrane. The polypeptide is UPF0182 protein MAV_4137 (Mycobacterium avium (strain 104)).